A 1350-amino-acid chain; its full sequence is Tectonin beta-propeller repeat-containing protein (1350 aa).

TECPR repeat units follow at residues 23 to 59 (GAWR…VHVH), 233 to 271 (LRWT…VRTG), 280 to 320 (DSWL…FRRG), and 336 to 371 (KGWV…HRSG). Over residues 396–415 (SSLSIVSRKSGGSSSTPGSK) the composition is skewed to low complexity. Disordered stretches follow at residues 396 to 420 (SSLS…QSFS) and 671 to 691 (SGSG…SGTF). In terms of domain architecture, Galectin spans 816-955 (YYNTLYNGMP…RIKLFNVLYR (140 aa)). TECPR repeat units follow at residues 966 to 1000 (MHWR…VYNG), 1187 to 1223 (DAWE…FRYG), 1232 to 1269 (DAWQ…VRKE), and 1278 to 1322 (SHWQ…RRCG).

It belongs to the TECPR1 family.

Its function is as follows. Involved in peroxisome biogenesis. The protein is Tectonin beta-propeller repeat-containing protein (Pex23) of Drosophila melanogaster (Fruit fly).